Here is a 292-residue protein sequence, read N- to C-terminus: tRNA-splicing endonuclease (292 aa).

Catalysis depends on residues Y231, H238, and K267.

The protein belongs to the tRNA-intron endonuclease family. Archaeal long subfamily. In terms of assembly, homodimer.

The enzyme catalyses pretRNA = a 3'-half-tRNA molecule with a 5'-OH end + a 5'-half-tRNA molecule with a 2',3'-cyclic phosphate end + an intron with a 2',3'-cyclic phosphate and a 5'-hydroxyl terminus.. Endonuclease that removes tRNA introns. Cleaves pre-tRNA at the 5'- and 3'-splice sites to release the intron. The products are an intron and two tRNA half-molecules bearing 2',3' cyclic phosphate and 5'-OH termini. Recognizes a pseudosymmetric substrate in which 2 bulged loops of 3 bases are separated by a stem of 4 bp. The polypeptide is tRNA-splicing endonuclease (Thermoplasma volcanium (strain ATCC 51530 / DSM 4299 / JCM 9571 / NBRC 15438 / GSS1)).